A 379-amino-acid chain; its full sequence is Nucleosome assembly protein 1;2 (379 aa).

Residues 26–80 (VNALKNKLQNLAGQHSDVLENLTPPVRKRVEFLREIQNQYDEMEAKFFEERAALE) are a coiled coil. Ser41 carries the post-translational modification Phosphoserine. Positions 47–62 (LTPPVRKRVEFLREIQ) match the Nuclear export signal motif. Positions 222-227 (KKKPKK) match the Nuclear localization signal motif. The tract at residues 298-379 (AVEADDLDIE…GERPPECKQQ (82 aa)) is disordered. Residues 299–342 (VEADDLDIEDDDDEIDEDDDEEDEEDDEDDEEEDDEDDDEEEEA) are compositionally biased toward acidic residues. Residues 347–360 (KSKKKSSAGHKKAG) show a composition bias toward basic residues. Cys376 carries the post-translational modification Cysteine methyl ester. The S-farnesyl cysteine moiety is linked to residue Cys376. Positions 377–379 (KQQ) are cleaved as a propeptide — removed in mature form.

This sequence belongs to the nucleosome assembly protein (NAP) family. As to quaternary structure, can form homomeric and heteromeric protein complexes with NAP1;1, NAP1;3 and NAP1;4. Binds histone H2A. In terms of tissue distribution, ubiquitous.

The protein resides in the nucleus. Its subcellular location is the cytoplasm. In terms of biological role, may modulate chromatin structure by regulation of nucleosome assembly/disassembly. May function in nucleotide excision repair (NER). Involved in somatic homologous recombination. This chain is Nucleosome assembly protein 1;2 (NAP1;2), found in Arabidopsis thaliana (Mouse-ear cress).